The chain runs to 408 residues: Arginine biosynthesis bifunctional protein ArgJ (408 aa).

Positions 156, 182, 193, 279, 403, and 408 each coordinate substrate. The active-site Nucleophile is Thr-193.

This sequence belongs to the ArgJ family. As to quaternary structure, heterotetramer of two alpha and two beta chains.

The protein resides in the cytoplasm. The catalysed reaction is N(2)-acetyl-L-ornithine + L-glutamate = N-acetyl-L-glutamate + L-ornithine. It catalyses the reaction L-glutamate + acetyl-CoA = N-acetyl-L-glutamate + CoA + H(+). Its pathway is amino-acid biosynthesis; L-arginine biosynthesis; L-ornithine and N-acetyl-L-glutamate from L-glutamate and N(2)-acetyl-L-ornithine (cyclic): step 1/1. It participates in amino-acid biosynthesis; L-arginine biosynthesis; N(2)-acetyl-L-ornithine from L-glutamate: step 1/4. Its function is as follows. Catalyzes two activities which are involved in the cyclic version of arginine biosynthesis: the synthesis of N-acetylglutamate from glutamate and acetyl-CoA as the acetyl donor, and of ornithine by transacetylation between N(2)-acetylornithine and glutamate. This is Arginine biosynthesis bifunctional protein ArgJ from Dechloromonas aromatica (strain RCB).